A 733-amino-acid polypeptide reads, in one-letter code: Ferric aerobactin receptor (733 aa).

The N-terminal stretch at 1–25 (MMISKKYTLWALNPLLLTMMAPAVA) is a signal peptide. The TonB box motif lies at 31-38 (ETFVVSAN). The TBDR plug domain maps to 43-153 (TVAEMAQTTW…TGGLINIVTK (111 aa)). The 576-residue stretch at 158–733 (ETIMEFEAGT…TFGLNYSVLF (576 aa)) folds into the TBDR beta-barrel domain. The short motif at 716–733 (YDYKGRGRTFGLNYSVLF) is the TonB C-terminal box element.

Belongs to the TonB-dependent receptor family.

It is found in the cell outer membrane. Receptor for aerobactin. The chain is Ferric aerobactin receptor (iutA) from Klebsiella pneumoniae.